The primary structure comprises 168 residues: ATP synthase F(1) complex subunit delta, mitochondrial (168 aa).

The N-terminal 22 residues, 1–22 (MLPSALLRRPGLGRLVRQVRLY), are a transit peptide targeting the mitochondrion. N6-acetyllysine; alternate occurs at positions 136 and 165. An N6-succinyllysine; alternate mark is found at K136 and K165.

The protein belongs to the ATPase epsilon chain family. As to quaternary structure, component of the ATP synthase complex composed at least of ATP5F1A/subunit alpha, ATP5F1B/subunit beta, ATP5MC1/subunit c (homooctomer), MT-ATP6/subunit a, MT-ATP8/subunit 8, ATP5ME/subunit e, ATP5MF/subunit f, ATP5MG/subunit g, ATP5MK/subunit k, ATP5MJ/subunit j, ATP5F1C/subunit gamma, ATP5F1D/subunit delta, ATP5F1E/subunit epsilon, ATP5PF/subunit F6, ATP5PB/subunit b, ATP5PD/subunit d, ATP5PO/subunit OSCP. ATP synthase complex consists of a soluble F(1) head domain (subunits alpha(3) and beta(3)) - the catalytic core - and a membrane F(0) domain - the membrane proton channel (subunits c, a, 8, e, f, g, k and j). These two domains are linked by a central stalk (subunits gamma, delta, and epsilon) rotating inside the F1 region and a stationary peripheral stalk (subunits F6, b, d, and OSCP). Component of a complex composed at least by ATPIF1, ATP5F1A, ATP5F1B, ATP5F1C AND ATP5F1E.

It is found in the mitochondrion. Its subcellular location is the mitochondrion inner membrane. In terms of biological role, subunit delta, of the mitochondrial membrane ATP synthase complex (F(1)F(0) ATP synthase or Complex V) that produces ATP from ADP in the presence of a proton gradient across the membrane which is generated by electron transport complexes of the respiratory chain. ATP synthase complex consist of a soluble F(1) head domain - the catalytic core - and a membrane F(1) domain - the membrane proton channel. These two domains are linked by a central stalk rotating inside the F(1) region and a stationary peripheral stalk. During catalysis, ATP synthesis in the catalytic domain of F(1) is coupled via a rotary mechanism of the central stalk subunits to proton translocation. In vivo, can only synthesize ATP although its ATP hydrolase activity can be activated artificially in vitro. With the central stalk subunit gamma, is essential for the biogenesis of F(1) catalytic part of the ATP synthase complex namely in the formation of F1 assembly intermediate. The polypeptide is ATP synthase F(1) complex subunit delta, mitochondrial (Bos taurus (Bovine)).